The following is a 699-amino-acid chain: Ubiquitin-like modifier-activating enzyme ATG7 (699 aa).

The GXGXXG motif motif lies at 370 to 375; that stretch reads GAGTLG. Cys-550 acts as the Glycyl thioester intermediate in catalysis. The interval 653–691 is homodimerization; sequence ALASRDYVAELSGLAEVQRLAEKAAAEMQWSEDEEGMGE.

It belongs to the ATG7 family. Homodimer. Interacts with ATG8 through a thioester bond between Cys-550 and the C-terminal Gly of ATG8 and with ATG12 through a thioester bond between Cys-550 and the C-terminal Gly of ATG12. Also interacts with ATG3.

The protein localises to the cytoplasm. The protein resides in the preautophagosomal structure. In terms of biological role, E1-like activating enzyme involved in the 2 ubiquitin-like systems required for cytoplasm to vacuole transport (Cvt) and autophagy. Activates ATG12 for its conjugation with ATG5 and ATG8 for its conjugation with phosphatidylethanolamine. Both systems are needed for the ATG8 association to Cvt vesicles and autophagosomes membranes. Autophagy is essential for maintenance of amino acid levels and protein synthesis under nitrogen starvation. Required for selective autophagic degradation of the nucleus (nucleophagy) as well as for mitophagy which contributes to regulate mitochondrial quantity and quality by eliminating the mitochondria to a basal level to fulfill cellular energy requirements and preventing excess ROS production. Required for normal mycelial growth and conidiogenesis. This is Ubiquitin-like modifier-activating enzyme ATG7 from Sordaria macrospora (strain ATCC MYA-333 / DSM 997 / K(L3346) / K-hell).